Here is a 374-residue protein sequence, read N- to C-terminus: GPN-loop GTPase 1 (374 aa).

Position 2 is an N-acetylalanine (Ala-2). 29 to 34 is a GTP binding site; the sequence is GSGKTT. The Gly-Pro-Asn (GPN)-loop; involved in dimer interface motif lies at 86-88; that stretch reads GPN. 189–192 contributes to the GTP binding site; that stretch reads NKTD. 3 positions are modified to phosphoserine: Ser-301, Ser-312, and Ser-314. The segment at 326–354 is disordered; the sequence is RGTLDEEDEEADSDTDDIDHRVTEESHEE. At Thr-328 the chain carries Phosphothreonine. Over residues 330–342 the composition is skewed to acidic residues; the sequence is DEEDEEADSDTDD. Ser-338 bears the Phosphoserine mark. Thr-340 is modified (phosphothreonine). Positions 343–354 are enriched in basic and acidic residues; the sequence is IDHRVTEESHEE.

This sequence belongs to the GPN-loop GTPase family. As to quaternary structure, heterodimer with GPN3. Binds to RNA polymerase II (RNAPII). Interacts directly with RNAPII subunits RPB4 and RPB7 and the CTD of RPB1. Interacts with XPA. As to expression, expressed ubiquitously.

The protein localises to the cytoplasm. The protein resides in the nucleus. Its function is as follows. Small GTPase required for proper nuclear import of RNA polymerase II (RNAPII). May act at an RNAP assembly step prior to nuclear import. Forms an interface between the RNA polymerase II enzyme and chaperone/scaffolding proteins, suggesting that it is required to connect RNA polymerase II to regulators of protein complex formation. May be involved in nuclear localization of XPA. This is GPN-loop GTPase 1 from Homo sapiens (Human).